We begin with the raw amino-acid sequence, 721 residues long: 1,4-alpha-glucan branching enzyme GlgB (721 aa).

Asp404 (nucleophile) is an active-site residue. Glu457 acts as the Proton donor in catalysis.

The protein belongs to the glycosyl hydrolase 13 family. GlgB subfamily. In terms of assembly, monomer.

The enzyme catalyses Transfers a segment of a (1-&gt;4)-alpha-D-glucan chain to a primary hydroxy group in a similar glucan chain.. It participates in glycan biosynthesis; glycogen biosynthesis. Functionally, catalyzes the formation of the alpha-1,6-glucosidic linkages in glycogen by scission of a 1,4-alpha-linked oligosaccharide from growing alpha-1,4-glucan chains and the subsequent attachment of the oligosaccharide to the alpha-1,6 position. The polypeptide is 1,4-alpha-glucan branching enzyme GlgB (Bradyrhizobium diazoefficiens (strain JCM 10833 / BCRC 13528 / IAM 13628 / NBRC 14792 / USDA 110)).